The sequence spans 545 residues: Myotubularin-related protein 9 (545 aa).

An N-acetylmethionine modification is found at Met-1. The GRAM domain maps to 4–99 (AELIKTPRVD…LNIASSIEAL (96 aa)). A Myotubularin phosphatase domain is found at 123–498 (GWHSFLPEQE…QSLQLWEGIF (376 aa)). Residues 508–542 (LDEAYEEMVNIIEYNKELQAKVNVLRRQLAELETE) adopt a coiled-coil conformation.

Belongs to the protein-tyrosine phosphatase family. Non-receptor class myotubularin subfamily. In terms of assembly, homodimer. Heterodimer (via C-terminus) with lipid phosphatase MTMR6 (via C-terminus). Heterodimer (via coiled coil domain) with lipid phosphatase MTMR7 (via C-terminus).

The protein localises to the cytoplasm. Its subcellular location is the cell projection. It is found in the ruffle membrane. The protein resides in the perinuclear region. It localises to the endoplasmic reticulum. Functionally, acts as an adapter for myotubularin-related phosphatases. Increases lipid phosphatase MTMR6 catalytic activity, specifically towards phosphatidylinositol 3,5-bisphosphate, and MTMR6 binding affinity for phosphorylated phosphatidylinositols. Positively regulates lipid phosphatase MTMR7 catalytic activity. The formation of the MTMR6-MTMR9 complex, stabilizes both MTMR6 and MTMR9 protein levels. Plays a role in the late stages of macropinocytosis possibly by regulating MTMR6-mediated dephosphorylation of phosphatidylinositol 3-phosphate in membrane ruffles. Negatively regulates DNA damage-induced apoptosis, in part via its association with MTMR6. Does not bind mono-, di- and tri-phosphorylated phosphatidylinositols, phosphatidic acid and phosphatidylserine. The sequence is that of Myotubularin-related protein 9 (Mtmr9) from Mus musculus (Mouse).